We begin with the raw amino-acid sequence, 155 residues long: Small ribosomal subunit protein uS7 (155 aa).

This sequence belongs to the universal ribosomal protein uS7 family. As to quaternary structure, part of the 30S ribosomal subunit. Contacts proteins S9 and S11.

One of the primary rRNA binding proteins, it binds directly to 16S rRNA where it nucleates assembly of the head domain of the 30S subunit. Is located at the subunit interface close to the decoding center, probably blocks exit of the E-site tRNA. The sequence is that of Small ribosomal subunit protein uS7 from Malacoplasma penetrans (strain HF-2) (Mycoplasma penetrans).